The following is a 131-amino-acid chain: uncharacterized protein (131 aa).

This is an uncharacterized protein from Escherichia coli.